Reading from the N-terminus, the 209-residue chain is Large ribosomal subunit protein uL3 (209 aa).

The tract at residues 128-154 (QQRGPMTHGSKFHRAPGSMGASSDPSR) is disordered.

This sequence belongs to the universal ribosomal protein uL3 family. As to quaternary structure, part of the 50S ribosomal subunit. Forms a cluster with proteins L14 and L19.

One of the primary rRNA binding proteins, it binds directly near the 3'-end of the 23S rRNA, where it nucleates assembly of the 50S subunit. In Clostridium beijerinckii (strain ATCC 51743 / NCIMB 8052) (Clostridium acetobutylicum), this protein is Large ribosomal subunit protein uL3.